Reading from the N-terminus, the 601-residue chain is Probable HECT-type ubiquitin ligase-interacting protein creD (601 aa).

2 disordered regions span residues 374–397 (EVDP…GTLS) and 454–496 (VSTD…GMAT). A compositionally biased stretch (low complexity) spans 455-473 (STDSFGPSSGSNSQSPASP). The span at 475 to 489 (LSRRPSDEGYHDHDY) shows a compositional bias: basic and acidic residues.

Belongs to the arrestin family. As to quaternary structure, interacts with hulA.

Its function is as follows. Component of the regulatory network controlling carbon source utilization through ubiquitination and deubiquitination involving creA, creB, creC, creD and acrB. May be involved in signaling by recognizing appropriately phosphorylated substrates via its arrestin domains and then recruit a HECT-type ubiquitin ligase such as hulA, leading to ubiquitination of the substrate, providing a link between ubiquitination and phosphorylation in protein regulation and stability. The protein is Probable HECT-type ubiquitin ligase-interacting protein creD (creD) of Aspergillus fumigatus (strain CBS 144.89 / FGSC A1163 / CEA10) (Neosartorya fumigata).